The chain runs to 177 residues: Bifunctional protein PyrR (177 aa).

The short motif at 99 to 111 is the PRPP-binding element; that stretch reads VVLVDDVLYTGRT.

It belongs to the purine/pyrimidine phosphoribosyltransferase family. PyrR subfamily.

It catalyses the reaction UMP + diphosphate = 5-phospho-alpha-D-ribose 1-diphosphate + uracil. In terms of biological role, regulates the transcription of the pyrimidine nucleotide (pyr) operon in response to exogenous pyrimidines. Its function is as follows. Also displays a weak uracil phosphoribosyltransferase activity which is not physiologically significant. The sequence is that of Bifunctional protein PyrR from Akkermansia muciniphila (strain ATCC BAA-835 / DSM 22959 / JCM 33894 / BCRC 81048 / CCUG 64013 / CIP 107961 / Muc).